The primary structure comprises 461 residues: Ribosomal protein uS12 methylthiotransferase RimO (461 aa).

The region spanning 9–124 (PRIGMVSLGC…VMDAVHLNLP (116 aa)) is the MTTase N-terminal domain. 6 residues coordinate [4Fe-4S] cluster: C18, C54, C83, C159, C163, and C166. Positions 145 to 387 (LTPRHYAYLK…AVAEAVSSQK (243 aa)) constitute a Radical SAM core domain. The region spanning 389-461 (QQRVGATMQV…QGHDLIAVPV (73 aa)) is the TRAM domain.

Belongs to the methylthiotransferase family. RimO subfamily. Requires [4Fe-4S] cluster as cofactor.

The protein localises to the cytoplasm. It catalyses the reaction L-aspartate(89)-[ribosomal protein uS12]-hydrogen + (sulfur carrier)-SH + AH2 + 2 S-adenosyl-L-methionine = 3-methylsulfanyl-L-aspartate(89)-[ribosomal protein uS12]-hydrogen + (sulfur carrier)-H + 5'-deoxyadenosine + L-methionine + A + S-adenosyl-L-homocysteine + 2 H(+). Its function is as follows. Catalyzes the methylthiolation of an aspartic acid residue of ribosomal protein uS12. In Polaromonas naphthalenivorans (strain CJ2), this protein is Ribosomal protein uS12 methylthiotransferase RimO.